Here is a 528-residue protein sequence, read N- to C-terminus: Cytochrome P450 monooxygenase ppsD (528 aa).

Residues 2-21 traverse the membrane as a helical segment; the sequence is LVLVSLVLCLTGFCLLQWAL. An N-linked (GlcNAc...) asparagine glycan is attached at N137. C441 provides a ligand contact to heme. N-linked (GlcNAc...) asparagine glycans are attached at residues N450 and N463.

This sequence belongs to the cytochrome P450 family. Heme serves as cofactor.

Its subcellular location is the membrane. In terms of biological role, cytochrome P450 monooxygenase; part of the gene cluster that mediates the biosynthesis of 2,4'-dihydroxy-3'-methoxypropiophenone. The first step of the pathway is the conversion of acetate into acetyl-CoA by the acyl-CoA ligase ppsA. Acetyl-CoA is then used as a starter unit by the polyketide synthase ppsB and condensed with 4 malonyl-CoA unit to produce the pentaketide backbone. During polyketide extension, the polykedite chain is probably reduced and dehydrated by the KR and PT domains, respectively. O-methylation seems to be catalyzed by an unknown methyltransferase rather than by the CMeT domain of ppsB. Two hydroxylations and one further decarboxylation step catalyzed by yet unknown enzymes are then required to yield 4'-hydroxy-3'-methoxypropiophenone. PpsC functions as a carrier protein to transport 4'-hydroxy-3'-methoxypropiophenone to a specific cell compartment in which 4'-hydroxy-3'-methoxypropiophenone is hydroxylated to 2,4'-dihydroxy-3'-methoxypropiophenone by a still to be identified enzyme. The protein is Cytochrome P450 monooxygenase ppsD of Aspergillus oryzae (strain ATCC 42149 / RIB 40) (Yellow koji mold).